A 1787-amino-acid chain; its full sequence is Chromodomain-helicase-DNA-binding protein 3 homolog (1787 aa).

Disordered stretches follow at residues 1 to 80 (MSDD…PDPY) and 170 to 258 (PVTP…KEQG). Positions 10 to 43 (DGDETMEEDSMLAEGHEDGEEDVGEDEEEVETEE) are enriched in acidic residues. A compositionally biased stretch (basic residues) spans 56–71 (PPPKKKKGGKKSSKKK). A compositionally biased stretch (basic and acidic residues) spans 192–243 (DGSDGEGGGHDSDQEFEALIKQHEKQQDEAEKGKEEARINRAAAKVDKRKAA). 2 PHD-type zinc fingers span residues 265-312 (QENC…CEEH) and 328-375 (MDYC…CIIP). 2 Chromo domains span residues 373–476 (IIPE…STLS) and 501–583 (MQIH…GPKE). A Helicase ATP-binding domain is found at 628-812 (RHCWSNGTDA…FHLLNFLAPD (185 aa)). 641 to 648 (DEMGLGKT) is a binding site for ATP. A DEAH box motif is present at residues 763-766 (DEAH). Residues 944–1107 (LLQKMLRKLK…GKSMSKTELD (164 aa)) form the Helicase C-terminal domain. Disordered regions lie at residues 1120-1141 (EEEA…PNEQ), 1186-1212 (TKEA…QDPN), 1248-1295 (ENMG…EERS), and 1754-1787 (RASS…YPRY). Acidic residues predominate over residues 1190 to 1199 (DDADDDEDET). Residues 1248–1261 (ENMGQDWSAQNNQQ) are compositionally biased toward polar residues. Basic and acidic residues predominate over residues 1761–1773 (TKDEPMDTSDKDI).

It belongs to the SNF2/RAD54 helicase family. Expressed in the head and vulva.

Its subcellular location is the nucleus. The catalysed reaction is ATP + H2O = ADP + phosphate + H(+). Its function is as follows. ATP-dependent chromatin-remodeling factor that has a role in notch signaling-dependent vulval cell fate determination. May also have a role in pharyngeal precursor cell specification. In Caenorhabditis elegans, this protein is Chromodomain-helicase-DNA-binding protein 3 homolog (chd-3).